Reading from the N-terminus, the 838-residue chain is GPMGIMGPRGFQGPAGEPGEPGQTGPAGARGPAGPPGKAGEDGHPGKPGRPGERGVVGPQGARGHNGIDGIKGQAGAPGVKGARGIPGERGRVGAPGPAGSRGSDGSVGPVGPAGPIGSAGPPGFPGAPGPKGEIGPVGNTGPAGPAGPRGKGAAGIPGVAGPRGIPGPVGASGATGARGIVGEPGPAGSKGEPGSAGPQGPPGPSGEEGKRGPNGESGSSGPTGPPGIRGSRGIPGADGRAGVMGPAGARGASGPTGVRGPSGDTGRPGEPGIMGPRGKEGPVGIPGIDGRVGPAGPAGEAGNIGFPGPKGPTGDPGKVGEKGHAGIAGNRGAPGPDGNNGAQGPPGPQGVQGGKGEQGPAGPPGFQGIPGPAGTTGEVGKPGERGITGEFGIPGPAGPRGERGPPGESGAAGPSGPIGSRGPSGPPGPDGNKGEPGVVGAPGTAGPAGSGGIPGERGAAGMPGGKGEKGETGIRGEVGTTGRDGARGAPGAVGAPGPAGATGDRGEAGAAGPAGPAGPRGTPGERGEVGPAGPNGFAGPAGAAGQPGAKGERGENGVVGPTGPIGSAGPAGPDGTPGPAGSRGDGGPPGVTGFPGAAGRTGPPGPSGITGPPGPPGAAGKRGDQGPVGRSGETGAGGPPGFTGEKGTAGPQGIIGAPGIIGIPGSRGIPGVSGSVGEPGPIGISGPPGARGPSGGVGNPGVNGAPGEAGRDGNPGNDGPPGRDGIPGHKGERGYAGNPGPVGAAGAPGPHGSVGPAGKHGNRGEPGPVGSVGPVGAIGPRNGIQGIPGIAGQHGDQGAPGSVGPAGPRGPAGPGGPPGKDGRTGHPGTVGPAGIRS.

The segment at 1–838 (GPMGIMGPRG…GTVGPAGIRS (838 aa)) is disordered. Over residues 11–38 (FQGPAGEPGEPGQTGPAGARGPAGPPGK) the composition is skewed to low complexity. Residues 39–53 (AGEDGHPGKPGRPGE) show a composition bias toward basic and acidic residues. 4 stretches are compositionally biased toward low complexity: residues 101-122 (SRGS…SAGP), 137-147 (PVGNTGPAGPA), 215-236 (NGES…RGIP), and 329-344 (AGNR…NGAQ). Positions 351–360 (GVQGGKGEQG) are enriched in gly residues. 2 stretches are compositionally biased toward low complexity: residues 407 to 424 (PGES…SRGP) and 436 to 446 (EPGVVGAPGTA). Residues 447–456 (GPAGSGGIPG) are compositionally biased toward gly residues. 3 stretches are compositionally biased toward low complexity: residues 479–523 (VGTT…PRGT), 530–550 (VGPA…QPGA), and 568–581 (SAGP…PGPA). The span at 582-591 (GSRGDGGPPG) shows a compositional bias: gly residues. A compositionally biased stretch (low complexity) spans 593-602 (TGFPGAAGRT). Residues 633–642 (GETGAGGPPG) show a composition bias toward gly residues. The segment covering 649–689 (TAGPQGIIGAPGIIGIPGSRGIPGVSGSVGEPGPIGISGPP) has biased composition (low complexity). The segment covering 693 to 702 (GPSGGVGNPG) has biased composition (gly residues). 3 stretches are compositionally biased toward low complexity: residues 703-718 (VNGA…NPGN), 736-758 (YAGN…VGPA), and 766-781 (EPGP…AIGP).

This sequence belongs to the fibrillar collagen family. As to quaternary structure, trimers of one alpha 2(I) and two alpha 1(I) chains. Interacts (via C-terminus) with TMEM131 (via PapD-L domain); the interaction is direct and is involved in assembly and TRAPPIII ER-to-Golgi transport complex-dependent secretion of collagen. Post-translationally, prolines at the third position of the tripeptide repeating unit (G-X-Y) are hydroxylated in some or all of the chains. In terms of tissue distribution, forms the fibrils of tendon, ligaments and bones. In bones, the fibrils are mineralized with calcium hydroxyapatite.

It localises to the secreted. The protein localises to the extracellular space. Its subcellular location is the extracellular matrix. In terms of biological role, type I collagen is a member of group I collagen (fibrillar forming collagen). The polypeptide is Collagen alpha-2(I) chain (Cyclopes didactylus (Silky anteater)).